Here is an 85-residue protein sequence, read N- to C-terminus: UPF0386 protein Arad_1912 (85 aa).

Belongs to the UPF0386 family.

The sequence is that of UPF0386 protein Arad_1912 from Rhizobium rhizogenes (strain K84 / ATCC BAA-868) (Agrobacterium radiobacter).